A 586-amino-acid chain; its full sequence is Aspartate--tRNA(Asp/Asn) ligase (586 aa).

Glutamate 175 contacts L-aspartate. The interval 199–202 (QIFK) is aspartate. Arginine 221 serves as a coordination point for L-aspartate. Residues 221-223 (RDE) and glutamine 230 each bind ATP. An L-aspartate-binding site is contributed by histidine 448. ATP is bound at residue glutamate 482. Arginine 489 serves as a coordination point for L-aspartate. 534 to 537 (GVDR) is an ATP binding site.

The protein belongs to the class-II aminoacyl-tRNA synthetase family. Type 1 subfamily. Homodimer.

The protein resides in the cytoplasm. It catalyses the reaction tRNA(Asx) + L-aspartate + ATP = L-aspartyl-tRNA(Asx) + AMP + diphosphate. Functionally, aspartyl-tRNA synthetase with relaxed tRNA specificity since it is able to aspartylate not only its cognate tRNA(Asp) but also tRNA(Asn). Reaction proceeds in two steps: L-aspartate is first activated by ATP to form Asp-AMP and then transferred to the acceptor end of tRNA(Asp/Asn). This Syntrophomonas wolfei subsp. wolfei (strain DSM 2245B / Goettingen) protein is Aspartate--tRNA(Asp/Asn) ligase.